The following is a 512-amino-acid chain: Centrosomal protein CCDC61 (512 aa).

Residue M1 is modified to N-acetylmethionine. A head domain region spans residues 1–142 (MEQPAGLQVD…PLPLPYQGKP (142 aa)). 2 coiled-coil regions span residues 176-203 (WHLREQVTRLASEKRELEAQLGRSREEA) and 246-273 (RRLAKELEEVKASERNLRARLKTLNCEL). A Phosphothreonine modification is found at T282. Disordered regions lie at residues 282–415 (TLPA…SFRS) and 430–472 (SQSV…HLAS). Residues 287–300 (AREDRALSSRERST) are compositionally biased toward basic and acidic residues. Phosphoserine is present on residues S328, S330, S372, and S375. Low complexity predominate over residues 406–415 (RSSSVDSFRS). S447 and S473 each carry phosphoserine.

Belongs to the CCDC61 family. In terms of assembly, forms homodimers (via head domain). Interacts with CEP170. Interacts with PCM1 and CEP131. Binds tubulin.

It localises to the cytoplasm. The protein resides in the cytoskeleton. Its subcellular location is the microtubule organizing center. It is found in the centrosome. The protein localises to the centriolar satellite. It localises to the cilium basal body. Its function is as follows. Microtubule-binding centrosomal protein required for centriole cohesion, independently of the centrosome-associated protein/CEP250 and rootletin/CROCC linker. In interphase, required for anchoring microtubule at the mother centriole subdistal appendages and for centrosome positioning. During mitosis, may be involved in spindle assembly and chromatin alignment by regulating the organization of spindle microtubules into a symmetrical structure. Plays a non-essential role in ciliogenesis. The polypeptide is Centrosomal protein CCDC61 (Rattus norvegicus (Rat)).